A 349-amino-acid chain; its full sequence is Spermidine/putrescine import ATP-binding protein PotA (349 aa).

The ABC transporter domain maps to 7–237 (IELKGITKSY…PANSFVAKFI (231 aa)). Residue 39–46 (GPSGCGKT) participates in ATP binding.

This sequence belongs to the ABC transporter superfamily. Spermidine/putrescine importer (TC 3.A.1.11.1) family. As to quaternary structure, the complex is composed of two ATP-binding proteins (PotA), two transmembrane proteins (PotB and PotC) and a solute-binding protein (PotD).

It is found in the cell membrane. It carries out the reaction ATP + H2O + polyamine-[polyamine-binding protein]Side 1 = ADP + phosphate + polyamineSide 2 + [polyamine-binding protein]Side 1.. Functionally, part of the ABC transporter complex PotABCD involved in spermidine/putrescine import. Responsible for energy coupling to the transport system. This chain is Spermidine/putrescine import ATP-binding protein PotA, found in Clostridium perfringens (strain SM101 / Type A).